The following is a 374-amino-acid chain: Glycerophosphodiester phosphodiesterase GDPD2 (374 aa).

One can recognise a GP-PDE domain in the interval 38–326; that stretch reads FSVIGHRGIG…DFVEEIIEST (289 aa). Residues 330-349 are disordered; that stretch reads MIRPPPSSSPLPSPSKDDDV. Over residues 332–342 the composition is skewed to pro residues; sequence RPPPSSSPLPS.

The protein belongs to the glycerophosphoryl diester phosphodiesterase family. As to expression, expressed in roots, shoots, flowers and siliques.

The catalysed reaction is a sn-glycero-3-phosphodiester + H2O = an alcohol + sn-glycerol 3-phosphate + H(+). The sequence is that of Glycerophosphodiester phosphodiesterase GDPD2 from Arabidopsis thaliana (Mouse-ear cress).